We begin with the raw amino-acid sequence, 107 residues long: uncharacterized protein (107 aa).

It is found in the mitochondrion. This is an uncharacterized protein from Arabidopsis thaliana (Mouse-ear cress).